The chain runs to 488 residues: UDP-N-acetylmuramoyl-L-alanyl-D-glutamate--2,6-diaminopimelate ligase (488 aa).

UDP-N-acetyl-alpha-D-muramoyl-L-alanyl-D-glutamate is bound by residues leucine 24, serine 26, and 41–43 (HQV). 113 to 119 (GTNGKTT) lines the ATP pocket. Residues asparagine 154, 155–156 (TT), serine 182, glutamine 188, and arginine 190 contribute to the UDP-N-acetyl-alpha-D-muramoyl-L-alanyl-D-glutamate site. Lysine 222 bears the N6-carboxylysine mark. Residues arginine 386, 410 to 413 (DNPR), glycine 461, and glutamate 465 each bind meso-2,6-diaminopimelate. The short motif at 410-413 (DNPR) is the Meso-diaminopimelate recognition motif element.

It belongs to the MurCDEF family. MurE subfamily. It depends on Mg(2+) as a cofactor. In terms of processing, carboxylation is probably crucial for Mg(2+) binding and, consequently, for the gamma-phosphate positioning of ATP.

It is found in the cytoplasm. It catalyses the reaction UDP-N-acetyl-alpha-D-muramoyl-L-alanyl-D-glutamate + meso-2,6-diaminopimelate + ATP = UDP-N-acetyl-alpha-D-muramoyl-L-alanyl-gamma-D-glutamyl-meso-2,6-diaminopimelate + ADP + phosphate + H(+). Its pathway is cell wall biogenesis; peptidoglycan biosynthesis. Its function is as follows. Catalyzes the addition of meso-diaminopimelic acid to the nucleotide precursor UDP-N-acetylmuramoyl-L-alanyl-D-glutamate (UMAG) in the biosynthesis of bacterial cell-wall peptidoglycan. The chain is UDP-N-acetylmuramoyl-L-alanyl-D-glutamate--2,6-diaminopimelate ligase from Haemophilus influenzae (strain PittGG).